Reading from the N-terminus, the 105-residue chain is Small ribosomal subunit protein uS10 (105 aa).

Belongs to the universal ribosomal protein uS10 family. As to quaternary structure, part of the 30S ribosomal subunit.

In terms of biological role, involved in the binding of tRNA to the ribosomes. In Synechocystis sp. (strain ATCC 27184 / PCC 6803 / Kazusa), this protein is Small ribosomal subunit protein uS10.